Here is a 229-residue protein sequence, read N- to C-terminus: MLDRDGFRPNVGIILLNQKNQVFWGKRIRTHSWQFPQGGIDRGETPEQAMFRELHEEVGLMPNHVRVVARTRDWLRYEVPDRYIRRDARGHYKGQKQIWYLLQLMGHDWDLNLRATDHPEFDAWRWNDYWVPLDVVVEFKRGVYEMALTELARFLPRGEQQRNRYLRSGMRPREAHETGPETYGAPGLHPARSGSFRVNPGMELPPGACFDPDPQSGQQQVLHPDPGKA.

The Nudix hydrolase domain occupies G6 to T149. Residues G38 to G59 carry the Nudix box motif. Residues S168–A229 are disordered.

This sequence belongs to the Nudix hydrolase family. RppH subfamily. A divalent metal cation is required as a cofactor.

In terms of biological role, accelerates the degradation of transcripts by removing pyrophosphate from the 5'-end of triphosphorylated RNA, leading to a more labile monophosphorylated state that can stimulate subsequent ribonuclease cleavage. The polypeptide is RNA pyrophosphohydrolase (Delftia acidovorans (strain DSM 14801 / SPH-1)).